A 465-amino-acid polypeptide reads, in one-letter code: Neuraminidase (465 aa).

Residues 1-11 lie on the Intravirion side of the membrane; that stretch reads MLPSTIQTLTL. The chain crosses the membrane as a helical span at residues 12 to 34; it reads FLTSGGVLLSLYVSASLSYLLYS. The involved in apical transport and lipid raft association stretch occupies residues 13–35; it reads LTSGGVLLSLYVSASLSYLLYSD. Residues 35-465 are Virion surface-facing; sequence DILLKFSSKI…DTVTGVDMAL (431 aa). A hypervariable stalk region region spans residues 38–85; the sequence is LKFSSKITAPTMTLDCANASNVQAVNRSATKEMTFLLPEPEWTYPRLS. N55 and N63 each carry an N-linked (GlcNAc...) asparagine; by host glycan. 8 cysteine pairs are disulfide-bonded: C86–C419, C121–C126, C181–C228, C230–C235, C276–C290, C278–C288, C317–C336, and C423–C446. Positions 88–465 are head of neuraminidase; sequence GSTFQKALLI…DTVTGVDMAL (378 aa). R115 lines the substrate pocket. N-linked (GlcNAc...) asparagine; by host glycosylation is present at N143. D148 (proton donor/acceptor) is an active-site residue. Substrate is bound at residue R149. Residue 274-275 participates in substrate binding; the sequence is EE. An N-linked (GlcNAc...) asparagine; by host glycan is attached at N283. R291 serves as a coordination point for substrate. 5 residues coordinate Ca(2+): D292, T296, D323, G343, and G345. R373 contributes to the substrate binding site. Y408 (nucleophile) is an active-site residue.

Belongs to the glycosyl hydrolase 34 family. In terms of assembly, homotetramer. The cofactor is Ca(2+). In terms of processing, N-glycosylated.

It is found in the virion membrane. Its subcellular location is the host apical cell membrane. It catalyses the reaction Hydrolysis of alpha-(2-&gt;3)-, alpha-(2-&gt;6)-, alpha-(2-&gt;8)- glycosidic linkages of terminal sialic acid residues in oligosaccharides, glycoproteins, glycolipids, colominic acid and synthetic substrates.. With respect to regulation, inhibited by the neuraminidase inhibitors zanamivir (Relenza) and oseltamivir (Tamiflu). These drugs interfere with the release of progeny virus from infected cells and are effective against all influenza strains. Resistance to neuraminidase inhibitors is quite rare. Functionally, catalyzes the removal of terminal sialic acid residues from viral and cellular glycoconjugates. Cleaves off the terminal sialic acids on the glycosylated HA during virus budding to facilitate virus release. Additionally helps virus spread through the circulation by further removing sialic acids from the cell surface. These cleavages prevent self-aggregation and ensure the efficient spread of the progeny virus from cell to cell. Otherwise, infection would be limited to one round of replication. Described as a receptor-destroying enzyme because it cleaves a terminal sialic acid from the cellular receptors. May facilitate viral invasion of the upper airways by cleaving the sialic acid moieties on the mucin of the airway epithelial cells. Likely to plays a role in the budding process through its association with lipid rafts during intracellular transport. May additionally display a raft-association independent effect on budding. Plays a role in the determination of host range restriction on replication and virulence. Sialidase activity in late endosome/lysosome traffic seems to enhance virus replication. The polypeptide is Neuraminidase (Influenza B virus (strain B/Beijing/1/1987)).